The primary structure comprises 189 residues: Haloacid dehalogenase-like hydrolase domain-containing protein 3 (189 aa).

Belongs to the HAD-like hydrolase superfamily.

The sequence is that of Haloacid dehalogenase-like hydrolase domain-containing protein 3 (hdhd3) from Xenopus tropicalis (Western clawed frog).